The primary structure comprises 395 residues: S-adenosylmethionine synthase (395 aa).

Glu-10 serves as a coordination point for Mg(2+). An ATP-binding site is contributed by His-16. Glu-44 provides a ligand contact to K(+). The L-methionine site is built by Glu-57 and Gln-100. ATP-binding positions include 168–170 (DGK), 236–239 (SGRF), 253–254 (RK), Ala-270, Lys-274, and Lys-278. Position 278 (Lys-278) interacts with L-methionine.

This sequence belongs to the AdoMet synthase family. As to quaternary structure, homotetramer. Mn(2+) is required as a cofactor. Requires Mg(2+) as cofactor. The cofactor is Co(2+). K(+) serves as cofactor.

Its subcellular location is the cytoplasm. The catalysed reaction is L-methionine + ATP + H2O = S-adenosyl-L-methionine + phosphate + diphosphate. It participates in amino-acid biosynthesis; S-adenosyl-L-methionine biosynthesis; S-adenosyl-L-methionine from L-methionine: step 1/1. Catalyzes the formation of S-adenosylmethionine from methionine and ATP. The reaction comprises two steps that are both catalyzed by the same enzyme: formation of S-adenosylmethionine (AdoMet) and triphosphate, and subsequent hydrolysis of the triphosphate. The polypeptide is S-adenosylmethionine synthase (METK) (Populus deltoides (Eastern poplar)).